A 311-amino-acid polypeptide reads, in one-letter code: 4-diphosphocytidyl-2-C-methyl-D-erythritol kinase (311 aa).

Residue K11 is part of the active site. Residue 94-104 (PVAAGLAGGSA) coordinates ATP. Residue D136 is part of the active site.

The protein belongs to the GHMP kinase family. IspE subfamily.

The catalysed reaction is 4-CDP-2-C-methyl-D-erythritol + ATP = 4-CDP-2-C-methyl-D-erythritol 2-phosphate + ADP + H(+). Its pathway is isoprenoid biosynthesis; isopentenyl diphosphate biosynthesis via DXP pathway; isopentenyl diphosphate from 1-deoxy-D-xylulose 5-phosphate: step 3/6. Its function is as follows. Catalyzes the phosphorylation of the position 2 hydroxy group of 4-diphosphocytidyl-2C-methyl-D-erythritol. The protein is 4-diphosphocytidyl-2-C-methyl-D-erythritol kinase of Synechococcus sp. (strain JA-2-3B'a(2-13)) (Cyanobacteria bacterium Yellowstone B-Prime).